A 92-amino-acid polypeptide reads, in one-letter code: MSRTVFCHYQQSDAEGLDFVPYPGELGQRIFAHIGKTAWQAWLAHQTMLINENRLSPRDPKHRAFLETELQKFLFERNADKPDGYVAPLGEE.

Belongs to the Fe(2+)-trafficking protein family.

Could be a mediator in iron transactions between iron acquisition and iron-requiring processes, such as synthesis and/or repair of Fe-S clusters in biosynthetic enzymes. The polypeptide is Probable Fe(2+)-trafficking protein (Xanthomonas oryzae pv. oryzae (strain MAFF 311018)).